A 40-amino-acid chain; its full sequence is Mastoparan-like peptide 12c (40 aa).

A signal peptide spans 1-7 (MSAEALA). The tract at residues 1-22 (MSAEALADPKADPLAGPNPDAD) is disordered. 4 AXPX repeats span residues 7 to 10 (ADPK), 11 to 14 (ADPL), 15 to 18 (AGPN), and 19 to 22 (PDAD). A propeptide spanning residues 8-25 (DPKADPLAGPNPDADPEA) is cleaved from the precursor. Leucine amide is present on Leu39.

It belongs to the MCD family. Mastoparan subfamily. Expressed by the venom gland.

The protein resides in the secreted. Its function is as follows. Shows mast cell degranulation and antimicrobial activities against the Gram-negative bacteria E.coli ATCC 25922 (MIC=6.0 ug/ml), the Gram-positive bacteria S.aureus ATCC 2592 (MIC=3.0 ug/ml) and the fungus C.albicans ATCC 2002 (MIC=12 ug/ml). Exhibits little hemolytic activity against washed human erythrocytes. Its mast cell degranulation activity may be related to the activation of G-protein coupled receptors in mast cells as well as interaction with other proteins located in cell endosomal membranes in the mast cells. In Vespa magnifica (Hornet), this protein is Mastoparan-like peptide 12c.